The chain runs to 206 residues: MKPLTPRQQQVFDLIKSKIEDTGMPPTRAEIARELGFRSANAAEEHLKALARKQAIEIIPGASRGIRILLEDAANDDQGLPLIGQVAAGEPILAQEHVESHYQVDPAMFKPKADFLLRVNGESMKDIGIMDGDLLAVHKTQDVRDGQVVVARVDDDVTVKRLERKGSTVLLHAENEEFSPIQVDLTSQHLTIEGLAVGIIRNTDWM.

Residues 28–48 (RAEIARELGFRSANAAEEHLK) constitute a DNA-binding region (H-T-H motif). Active-site for autocatalytic cleavage activity residues include Ser123 and Lys160.

It belongs to the peptidase S24 family. As to quaternary structure, homodimer.

The enzyme catalyses Hydrolysis of Ala-|-Gly bond in repressor LexA.. In terms of biological role, represses a number of genes involved in the response to DNA damage (SOS response), including recA and lexA. In the presence of single-stranded DNA, RecA interacts with LexA causing an autocatalytic cleavage which disrupts the DNA-binding part of LexA, leading to derepression of the SOS regulon and eventually DNA repair. This chain is LexA repressor, found in Vibrio campbellii (strain ATCC BAA-1116).